The chain runs to 1116 residues: Rho GTPase-activating protein 45 (1116 aa).

Residues 1-72 are disordered; the sequence is MFSRKKRELM…RPTSLSRHAS (72 aa). Over residues 22–31 the composition is skewed to polar residues; the sequence is GSPNPQSSSG. Phosphoserine occurs at positions 23, 72, 92, and 98. The F-BAR domain occupies 268–538; the sequence is EEVDMLLQRC…SSKLYDPGQQ (271 aa). Positions 375 to 498 form a coiled coil; sequence EHERRRKEIK…QIQEVIRQSD (124 aa). The interval 422-457 is disordered; sequence VAKAEEEQQGTGPGAGTAASKALDKRRRLEEEAKNK. The span at 448–457 shows a compositional bias: basic and acidic residues; that stretch reads RRLEEEAKNK. A phosphoserine mark is found at S568, S577, S591, and S618. The segment at 569–658 is disordered; sequence PIMRTRKGSF…MSSSEELGDQ (90 aa). A compositionally biased stretch (polar residues) spans 621 to 635; sequence ISISDTEVGLDTSSG. Positions 643-652 are enriched in low complexity; the sequence is TSSSGTMSSS. The segment at 699-744 adopts a Phorbol-ester/DAG-type zinc-finger fold; that stretch reads THRLRKLRTPAKCRECNSYVYFQGAECEECCLACHKKCLETLAIQC. A Rho-GAP domain is found at 758-971; that stretch reads QDFSQAALST…TLIVHYGLVF (214 aa). Residues S946, S1017, S1020, and S1022 each carry the phosphoserine modification. Disordered stretches follow at residues 1004-1035 and 1050-1116; these read EEAE…SSSD and AGLE…PQFV. Composition is skewed to polar residues over residues 1080 to 1090 and 1105 to 1116; these read FNTNQSNNTSR and GGTSQERQPQFV.

It is found in the cytoplasm. The protein resides in the cell projection. It localises to the ruffle membrane. In terms of biological role, contains a GTPase activator for the Rho-type GTPases (RhoGAP) domain that would be able to negatively regulate the actin cytoskeleton as well as cell spreading. However, also contains N-terminally a BAR-domin which is able to play an autoinhibitory effect on this RhoGAP activity. The sequence is that of Rho GTPase-activating protein 45 from Mus musculus (Mouse).